Reading from the N-terminus, the 349-residue chain is Methylglutaconyl-CoA hydratase 1, mitochondrial (349 aa).

The transit peptide at 1-37 directs the protein to the mitochondrion; the sequence is MPPVSRILSYAPRVAIRPSSQLARPARAFAVGTVRYY.

Belongs to the enoyl-CoA hydratase/isomerase family. As to quaternary structure, homohexamer.

The protein resides in the mitochondrion. The enzyme catalyses (3S)-3-hydroxy-3-methylglutaryl-CoA = 3-methyl-(2E)-glutaconyl-CoA + H2O. It participates in amino-acid degradation; L-leucine degradation; (S)-3-hydroxy-3-methylglutaryl-CoA from 3-isovaleryl-CoA: step 3/3. Its function is as follows. 3-methylglutaconyl-CoA hydratase that catalyzes the fifth step in the leucine degradation pathway, the reversible hydration of 3-methylglutaconyl-CoA (3-MG-CoA) to 3-hydroxy-3-methylglutaryl-CoA (HMG-CoA). Involved in vegetative growth, conidiation and in the stress response. Controls mitochondrial morphology and mitophagy, which are critical for the infectious growth of the pathogen. In Pyricularia oryzae (strain 70-15 / ATCC MYA-4617 / FGSC 8958) (Rice blast fungus), this protein is Methylglutaconyl-CoA hydratase 1, mitochondrial.